A 321-amino-acid chain; its full sequence is MYLYTLILLFLASANVNAYANPGACSGNCWTHDPGLYQRKSDGKYFRFATGGGIHIASADSLEGPWTDDGYVLPSGSIIDLDGKTNLWAPDLHYHDGTYYLYYAVSSLGSQNSATGVATSKTMEAGSWTDHGTTGIESTPSSPYNTIDANWIAVGGTQYVNFGSYWNNLFQVEMENGLKVKSGATPHQIAYNASGIHRQEAAFMFERNNYFYLTFSGGIALGYNDTWPAPGEEYFIAVCRSTSATGGFVDKNGVSCLNSGGSLLLSSHDFVYGPGGQGILQDSSKGFVLYYHYADTRIGKAVEDYQFGWNQLKWENDWPSV.

Positions 1–18 (MYLYTLILLFLASANVNA) are cleaved as a signal peptide. The Proton acceptor role is filled by aspartate 33. Asparagine 192 carries N-linked (GlcNAc...) asparagine glycosylation. The Proton donor role is filled by glutamate 200. N-linked (GlcNAc...) asparagine glycosylation occurs at asparagine 224.

The protein belongs to the glycosyl hydrolase 43 family.

The protein localises to the secreted. It catalyses the reaction Endohydrolysis of (1-&gt;5)-alpha-arabinofuranosidic linkages in (1-&gt;5)-arabinans.. It participates in glycan metabolism; L-arabinan degradation. In terms of biological role, endo-1,5-alpha-L-arabinanase involved in degradation of pectin. Its preferred substrate is linear 1,5-alpha-L-arabinan. The chain is Probable arabinan endo-1,5-alpha-L-arabinosidase C (abnC) from Aspergillus fumigatus (strain ATCC MYA-4609 / CBS 101355 / FGSC A1100 / Af293) (Neosartorya fumigata).